The chain runs to 236 residues: MRRFDIGWKTYLLPEIHPEGWRFISIFAAVTFGLWLWQDWLVVPGLVLTIWCVYFFRNPKRTVPDRLGLVVTPASGIVQMVGLVDPPAELALDPPGPRQRISVFMSVFDCHVNRCPVGGTVRKIVYAPGKFVNATLDKASADNERNSVVLDIGQSRDLAFVQIAGLVARRIRCDLVEGQSVLTGEIMGLIRFGSRLDIYLPPGAAPLVAPGQSCISGETVLADLASAEPERLGVLR.

Catalysis depends on Ser194, which acts as the Schiff-base intermediate with substrate; via pyruvic acid. Ser194 bears the Pyruvic acid (Ser); by autocatalysis mark.

Belongs to the phosphatidylserine decarboxylase family. PSD-A subfamily. Heterodimer of a large membrane-associated beta subunit and a small pyruvoyl-containing alpha subunit. The cofactor is pyruvate. Post-translationally, is synthesized initially as an inactive proenzyme. Formation of the active enzyme involves a self-maturation process in which the active site pyruvoyl group is generated from an internal serine residue via an autocatalytic post-translational modification. Two non-identical subunits are generated from the proenzyme in this reaction, and the pyruvate is formed at the N-terminus of the alpha chain, which is derived from the carboxyl end of the proenzyme. The post-translation cleavage follows an unusual pathway, termed non-hydrolytic serinolysis, in which the side chain hydroxyl group of the serine supplies its oxygen atom to form the C-terminus of the beta chain, while the remainder of the serine residue undergoes an oxidative deamination to produce ammonia and the pyruvoyl prosthetic group on the alpha chain.

The protein resides in the cell membrane. The catalysed reaction is a 1,2-diacyl-sn-glycero-3-phospho-L-serine + H(+) = a 1,2-diacyl-sn-glycero-3-phosphoethanolamine + CO2. Its pathway is phospholipid metabolism; phosphatidylethanolamine biosynthesis; phosphatidylethanolamine from CDP-diacylglycerol: step 2/2. Functionally, catalyzes the formation of phosphatidylethanolamine (PtdEtn) from phosphatidylserine (PtdSer). The chain is Phosphatidylserine decarboxylase proenzyme from Rhodospirillum rubrum (strain ATCC 11170 / ATH 1.1.1 / DSM 467 / LMG 4362 / NCIMB 8255 / S1).